Here is a 190-residue protein sequence, read N- to C-terminus: CASP-like protein 2U1 (190 aa).

At 1–16 the chain is on the cytoplasmic side; that stretch reads MAFTSLLGSDAERKVA. A helical membrane pass occupies residues 17–37; the sequence is VAEVALRAVLCGLGALAAALV. At 38-59 the chain is on the extracellular side; sequence ATDTQTRTFFSLQKKATYTDMK. Residues 60–80 traverse the membrane as a helical segment; the sequence is AMVLLVAAAAAAAGYSLLQAA. Residues 81–100 are Cytoplasmic-facing; sequence RCCCCVALLRTSIRPRARLL. A helical membrane pass occupies residues 101-121; that stretch reads LAWCVFACDQALAYALLAAVV. Topologically, residues 122–152 are extracellular; the sequence is AALQASVVAKQGLPQLQWMAICALYGAFCRQ. Residues 153–173 traverse the membrane as a helical segment; sequence AGAGVACAVAAAVDAALLAFL. Residues 174 to 190 are Cytoplasmic-facing; that stretch reads SAFNLFRLYGAKATTTT.

Belongs to the Casparian strip membrane proteins (CASP) family. Homodimer and heterodimers.

It localises to the cell membrane. This chain is CASP-like protein 2U1, found in Zea mays (Maize).